The primary structure comprises 381 residues: Putative steryl acetyl hydrolase mug81 (381 aa).

At 1 to 9 (MISLSLLYR) the chain is on the cytoplasmic side. The chain crosses the membrane as a helical; Signal-anchor for type II membrane protein span at residues 10-30 (ILTLPIILVGTTILYFTIGTN). Topologically, residues 31–381 (FPHDELRHNL…YTFLRETFEE (351 aa)) are lumenal. Positions 125 to 127 (HGG) match the Involved in the stabilization of the negatively charged intermediate by the formation of the oxyanion hole motif. An N-linked (GlcNAc...) asparagine glycan is attached at asparagine 193. Serine 200 is an active-site residue.

It belongs to the 'GDXG' lipolytic enzyme family.

The protein resides in the cytoplasm. It is found in the endoplasmic reticulum membrane. Its function is as follows. Required for the deacetylation of acetylated sterols. Has a role in meiosis. The sequence is that of Putative steryl acetyl hydrolase mug81 (mug180) from Schizosaccharomyces pombe (strain 972 / ATCC 24843) (Fission yeast).